A 406-amino-acid chain; its full sequence is MSKLYVGSEVGQLRRVLLNRPERALTHLTPSNCHELLFDDVLLVEAAGKEHDAFADTLRQQGVEVLLLHDLMVDTLAVPEAKQWLLDVQISDFRYGPIFARDLRRYLSEMDNEHLATILLGGLAYSELPIQSASMLPRMKQPLDFVIEPLPNHLFTRDTSCWVYGGVSLNPMMKPARQRETNHLRAIYQWHPIFAGQDFIKYFGNEDLHYDNANIEGGDVLVIGKGAVLIGMSERTTPQGVENLAANLFKHGQAKEVIAIELPKHRSCMHLDTVMTHMDVDTFSVYPEIMRKDLHTWRLTPKGNGEMQVEALHNYLHAIERALGLNHLNIITTGGDSYEAEREQWNDANNVLTVKPGVVIGYERNVYTNEKYDKAGIEVLTIPGNELGRGRGGARCMSCPIERDDI.

Cys-396 functions as the Amidino-cysteine intermediate in the catalytic mechanism.

It belongs to the arginine deiminase family.

It localises to the cytoplasm. It catalyses the reaction L-arginine + H2O = L-citrulline + NH4(+). The protein operates within amino-acid degradation; L-arginine degradation via ADI pathway; carbamoyl phosphate from L-arginine: step 1/2. The sequence is that of Arginine deiminase from Vibrio vulnificus (strain CMCP6).